A 199-amino-acid chain; its full sequence is ATP-dependent Clp protease proteolytic subunit 2 (199 aa).

Catalysis depends on Ser98, which acts as the Nucleophile. His123 is an active-site residue.

This sequence belongs to the peptidase S14 family. In terms of assembly, fourteen ClpP subunits assemble into 2 heptameric rings which stack back to back to give a disk-like structure with a central cavity, resembling the structure of eukaryotic proteasomes.

It is found in the cytoplasm. It catalyses the reaction Hydrolysis of proteins to small peptides in the presence of ATP and magnesium. alpha-casein is the usual test substrate. In the absence of ATP, only oligopeptides shorter than five residues are hydrolyzed (such as succinyl-Leu-Tyr-|-NHMec, and Leu-Tyr-Leu-|-Tyr-Trp, in which cleavage of the -Tyr-|-Leu- and -Tyr-|-Trp bonds also occurs).. Its function is as follows. Cleaves peptides in various proteins in a process that requires ATP hydrolysis. Has a chymotrypsin-like activity. Plays a major role in the degradation of misfolded proteins. This chain is ATP-dependent Clp protease proteolytic subunit 2, found in Corynebacterium efficiens (strain DSM 44549 / YS-314 / AJ 12310 / JCM 11189 / NBRC 100395).